Reading from the N-terminus, the 284-residue chain is Neutral protease 2 homolog AFLA_119780 (284 aa).

Disulfide bonds link cysteine 113/cysteine 185 and cysteine 192/cysteine 210. Histidine 235 is a binding site for Zn(2+). The active site involves glutamate 236. The Zn(2+) site is built by histidine 239 and aspartate 250.

Belongs to the peptidase M35 family. Zn(2+) serves as cofactor.

It is found in the secreted. The catalysed reaction is Preferential cleavage of bonds with hydrophobic residues in P1'. Also 3-Asn-|-Gln-4 and 8-Gly-|-Ser-9 bonds in insulin B chain.. In terms of biological role, secreted metalloproteinase that allows assimilation of proteinaceous substrates. Shows high activities on basic nuclear substrates such as histone and protamine. The polypeptide is Neutral protease 2 homolog AFLA_119780 (Aspergillus flavus (strain ATCC 200026 / FGSC A1120 / IAM 13836 / NRRL 3357 / JCM 12722 / SRRC 167)).